Reading from the N-terminus, the 116-residue chain is Large ribosomal subunit protein bL17 (116 aa).

This sequence belongs to the bacterial ribosomal protein bL17 family. Part of the 50S ribosomal subunit. Contacts protein L32.

The sequence is that of Large ribosomal subunit protein bL17 from Dictyoglomus turgidum (strain DSM 6724 / Z-1310).